A 505-amino-acid chain; its full sequence is RNA-splicing ligase RtcB homolog (505 aa).

D119, C122, H227, and H259 together coordinate Mn(2+). N226 to E230 contributes to the GMP binding site. S300 is modified (phosphoserine). H353 provides a ligand contact to Mn(2+). GMP-binding positions include H353–N354, G402–M405, S409, and H428–G431. H428 acts as the GMP-histidine intermediate in catalysis. Residue K496 forms a Glycyl lysine isopeptide (Lys-Gly) (interchain with G-Cter in SUMO2) linkage. A GMP-binding site is contributed by K504.

This sequence belongs to the RtcB family. Catalytic component of the tRNA-splicing ligase complex. Mn(2+) is required as a cofactor.

It is found in the nucleus. The protein localises to the cytoplasm. It catalyses the reaction a 3'-end 3'-phospho-ribonucleotide-RNA + a 5'-end dephospho-ribonucleoside-RNA + GTP = a ribonucleotidyl-ribonucleotide-RNA + GMP + diphosphate. The enzyme catalyses a 3'-end 2',3'-cyclophospho-ribonucleotide-RNA + a 5'-end dephospho-ribonucleoside-RNA + GTP + H2O = a ribonucleotidyl-ribonucleotide-RNA + GMP + diphosphate + H(+). Its activity is regulated as follows. Protein archease stimulates the activity of the tRNA ligase complex with high efficiency in the presence of GTP. Functionally, catalytic subunit of the tRNA-splicing ligase complex that acts by directly joining spliced tRNA halves to mature-sized tRNAs by incorporating the precursor-derived splice junction phosphate into the mature tRNA as a canonical 3',5'-phosphodiester. May act as an RNA ligase with broad substrate specificity, and may function toward other RNAs. This Homo sapiens (Human) protein is RNA-splicing ligase RtcB homolog.